A 581-amino-acid polypeptide reads, in one-letter code: MIKRALAPIVQPQRLFAALMVIGGGGRSATTTTTTTTKACGNGSSQSPPSTPLLSSKSSTITSNKKSAIPSSHLYIPKKSTLDSRQIGNYSREYSTSSSSSSKKSIFNDTYLNDLFWQLSSQGPAFEVNPNNIDFIQEPIDFYNHLIDGVKRSKKRITMASLYLGTSKQEIELVKEMKLAMERNKELKIHILLDGLRGTRIGLDKESSATILGELLSLYSDRVTISMYHTPDLNGILKKVLPPRINETIGVQHIKTYIFDDDLLLSGANLSKDYFTNRQDRYVLIRSTSTVSNYFNEIVEIIGSLSLHVDKDNRNQLLLSSGSIDPVTQSNEFKNLAYTKLSTLLKSHSYYPSNSNSNSSVDSPFDCNNINNGETTWIFPTIQMGPFNIRQDEVVTSHIFESVPNDSKFFITSPYFNLTENYLNLILTGKPKLDIITCSPQANGFYGSKGLSSAVPDCYAIIEKRFLQRVQDTDNGDRISVQEYIRDKWTYHAKGLWIQVKNQQHPSITLIGSPNFGSRSVEKDLEAQIILITQNKQLQQKMENEKNYLWTDTQNANLELFEKRKVSLMVRFLVYIFGNYL.

Residues 27-65 (RSATTTTTTTTKACGNGSSQSPPSTPLLSSKSSTITSNK) form a disordered region. Residues 44 to 65 (SSQSPPSTPLLSSKSSTITSNK) are compositionally biased toward low complexity. 160-167 (ASLYLGTS) is an ATP binding site. PLD phosphodiesterase domains lie at 248–274 (TIGVQHIKTYIFDDDLLLSGANLSKDY) and 487–520 (DKWTYHAKGLWIQVKNQQHPSITLIGSPNFGSRS). Residues His253, Lys255, and Asp260 contribute to the active site.

The protein belongs to the CDP-alcohol phosphatidyltransferase class-II family.

It catalyses the reaction a CDP-1,2-diacyl-sn-glycerol + sn-glycerol 3-phosphate = a 1,2-diacyl-sn-glycero-3-phospho-(1'-sn-glycero-3'-phosphate) + CMP + H(+). It functions in the pathway phospholipid metabolism; phosphatidylglycerol biosynthesis; phosphatidylglycerol from CDP-diacylglycerol: step 1/2. Its function is as follows. Functions in the biosynthesis of the anionic phospholipids phosphatidylglycerol and cardiolipin. This Dictyostelium discoideum (Social amoeba) protein is Probable CDP-diacylglycerol--glycerol-3-phosphate 3-phosphatidyltransferase (pgs1).